The primary structure comprises 360 residues: GDSL esterase/lipase At2g31540 (360 aa).

An N-terminal signal peptide occupies residues 1–23 (MSTSKAITLTLFIATTLLAPCNA). Ser-42 acts as the Nucleophile in catalysis. Asn-104 and Asn-326 each carry an N-linked (GlcNAc...) asparagine glycan. Catalysis depends on residues Asp-334 and His-337.

This sequence belongs to the 'GDSL' lipolytic enzyme family.

Its subcellular location is the secreted. The protein is GDSL esterase/lipase At2g31540 of Arabidopsis thaliana (Mouse-ear cress).